Consider the following 221-residue polypeptide: MTDSVVVIYSGGMDSFTLLHLARARGLKVHALSFNYGQRHVRELDVAADVCRAEGIPHKVIDIRAMSEVMSGSSLTSDIEVPEGHYEEDTMKATVVPNRNMILLSLATGYAVTTGAGAVWYGAHGGDHAIYPDCRPEFVEKMDAVCRVANYEPVGIEAPFMAMDKGQILAEGLKLGLDYSQTWTCYNGRDKACGRCGSCVERLEAFAANGVTDPLAYERLA.

An ATP-binding site is contributed by 9-19; sequence YSGGMDSFTLL. Zn(2+) is bound by residues C185, C193, C196, and C199.

The protein belongs to the QueC family. Zn(2+) serves as cofactor.

The enzyme catalyses 7-carboxy-7-deazaguanine + NH4(+) + ATP = 7-cyano-7-deazaguanine + ADP + phosphate + H2O + H(+). It participates in purine metabolism; 7-cyano-7-deazaguanine biosynthesis. Functionally, catalyzes the ATP-dependent conversion of 7-carboxy-7-deazaguanine (CDG) to 7-cyano-7-deazaguanine (preQ(0)). This chain is 7-cyano-7-deazaguanine synthase, found in Marinobacter nauticus (strain ATCC 700491 / DSM 11845 / VT8) (Marinobacter aquaeolei).